Reading from the N-terminus, the 173-residue chain is Shikimate kinase 2 (173 aa).

An ATP-binding site is contributed by 12-17 (GCGKTT). 2 residues coordinate Mg(2+): Thr-16 and Asp-32. Residues Asp-34, Arg-58, and Gly-79 each contribute to the substrate site. An LID domain region spans residues 112 to 126 (QASPQAHQRPTLTGR). Position 120 (Arg-120) interacts with ATP. Arg-139 contributes to the substrate binding site. Gln-155 is a binding site for ATP.

As to quaternary structure, monomer. It depends on Mg(2+) as a cofactor.

It localises to the cytoplasm. The enzyme catalyses shikimate + ATP = 3-phosphoshikimate + ADP + H(+). The protein operates within metabolic intermediate biosynthesis; chorismate biosynthesis; chorismate from D-erythrose 4-phosphate and phosphoenolpyruvate: step 5/7. Inhibited by chloride and sulfate ions. Its function is as follows. Catalyzes the specific phosphorylation of the 3-hydroxyl group of shikimic acid using ATP as a cosubstrate. The protein is Shikimate kinase 2 (aroL) of Dickeya chrysanthemi (Pectobacterium chrysanthemi).